The following is a 272-amino-acid chain: MSQPILVFDSGIGGLSVLAEIRKLLPHHDYCYLFDNARLPYGELEEQELVSGCVALIDQVVERTHAAIVVVACNTASTVVLPALRATLSIPVVGVVPAIKPAAQLSKSKRIGLLATPGTVKRHYTYELISQFADDCHVELFGSSELVLMAEQKIATGQLDMARLTQVLSPIVTADLDVLVLGCTHFPMLRDELQQVLGKGVTLLDSGEAIAKRVKTLLAETKSEQQVQEDANRDSVMQAFYTKAKISEGLVSMLVDCGFSTLERITTINSNR.

Substrate is bound by residues 9–10 and 41–42; these read DS and YG. The active-site Proton donor/acceptor is the Cys-73. 74-75 is a substrate binding site; the sequence is NT. The active-site Proton donor/acceptor is the Cys-183. 184–185 serves as a coordination point for substrate; it reads TH.

The protein belongs to the aspartate/glutamate racemases family.

It carries out the reaction L-glutamate = D-glutamate. Its pathway is cell wall biogenesis; peptidoglycan biosynthesis. Provides the (R)-glutamate required for cell wall biosynthesis. This chain is Glutamate racemase, found in Shewanella sp. (strain MR-4).